The primary structure comprises 263 residues: Small ribosomal subunit protein eS4, Y isoform 1 (263 aa).

An S4 RNA-binding domain is found at 42-104; it reads LPLIVFLRNR…TGEHFRLVYD (63 aa).

The protein belongs to the eukaryotic ribosomal protein eS4 family.

The sequence is that of Small ribosomal subunit protein eS4, Y isoform 1 (RPS4Y1) from Homo sapiens (Human).